We begin with the raw amino-acid sequence, 333 residues long: Glycerol-3-phosphate dehydrogenase [NAD(P)+] (333 aa).

Residues Trp13, Lys33, and Lys108 each coordinate NADPH. Sn-glycerol 3-phosphate is bound by residues Lys108 and Gly138. Ser142 contacts NADPH. Sn-glycerol 3-phosphate is bound by residues Lys193, Asp246, Ser256, Arg257, and Asn258. The active-site Proton acceptor is Lys193. Arg257 provides a ligand contact to NADPH. 2 residues coordinate NADPH: Val281 and Glu283.

It belongs to the NAD-dependent glycerol-3-phosphate dehydrogenase family.

The protein resides in the cytoplasm. The enzyme catalyses sn-glycerol 3-phosphate + NAD(+) = dihydroxyacetone phosphate + NADH + H(+). The catalysed reaction is sn-glycerol 3-phosphate + NADP(+) = dihydroxyacetone phosphate + NADPH + H(+). Its pathway is membrane lipid metabolism; glycerophospholipid metabolism. Functionally, catalyzes the reduction of the glycolytic intermediate dihydroxyacetone phosphate (DHAP) to sn-glycerol 3-phosphate (G3P), the key precursor for phospholipid synthesis. This chain is Glycerol-3-phosphate dehydrogenase [NAD(P)+], found in Bifidobacterium longum subsp. infantis (strain ATCC 15697 / DSM 20088 / JCM 1222 / NCTC 11817 / S12).